We begin with the raw amino-acid sequence, 633 residues long: MATVRICVCGDEGTGKSSLITSLVKGVFVTNKIQPILPQITIPPTIGTPENVTTTTVVDTSALPQERSNLAREIRKSNVILLVYSDHYSYERVALFWLPYFRSLGVNVPVVLCANKSDLAADHSEAQVIEEEMLPLMAEFKEIDSCIRTSAREHRNVNEAFFLCQKAVTHPIAPLFDSKESALKPAAVAALQRIFYLSDKDRDGYLSDKELEDFQMRCFEKPLSEEDLVHIKETIQKTHPTSVAPSGIDCRGFIHLNKMYAEKGRHETVWIILRAFQYTDNLSLQESFLHPRFEVPPYASAELSPEGYRFFVNLFLLSDKDNDGGLNDAELASLFAPTPGLPASWADGSFPSSTVRNEAGHVTLQGWLAQWSMTTFTSPKTTLEYLAYLGFESSDRSNPSTTAALKVTRPRKRRKRPGRVGRNVVLGHVLGPPGSGKSALLDAFLARGFSTTYHPTIQPRTAVNTVELPGGKQCYLILDELGELEPAILENQVKLLDQCDVIVYTYDSSDPDSFAYIPELRSKYPHLEELPSVFVALKADLDRTTQRAEYQPHEYTAMLNMPSSPLHVSVTWSSMQEVFVHIAEAAMEPSTAFPRSEEDVEGKWMAWGIALGAVVCAGAAAVMIWRRVSGSGT.

One can recognise a Miro 1 domain in the interval 1–170 (MATVRICVCG…FFLCQKAVTH (170 aa)). Topologically, residues 1 to 603 (MATVRICVCG…PRSEEDVEGK (603 aa)) are cytoplasmic. Residues 10–17 (GDEGTGKS), 59–63 (DTSAL), and 115–118 (NKSD) each bind GTP. 2 consecutive EF-hand domains span residues 186–221 (AAVAALQRIFYLSDKDRDGYLSDKELEDFQMRCFEK) and 306–341 (EGYRFFVNLFLLSDKDNDGGLNDAELASLFAPTPGL). Residues D199, D201, D203, Y205, E210, D319, D321, D323, and E330 each coordinate Ca(2+). The tract at residues 398–418 (NPSTTAALKVTRPRKRRKRPG) is disordered. The segment covering 408–418 (TRPRKRRKRPG) has biased composition (basic residues). The region spanning 422 to 588 (RNVVLGHVLG…FVHIAEAAME (167 aa)) is the Miro 2 domain. Residues 431–438 (GPPGSGKS), 467–471 (ELPGG), and 537–540 (LKAD) contribute to the GTP site. The chain crosses the membrane as a helical; Anchor for type IV membrane protein span at residues 604–624 (WMAWGIALGAVVCAGAAAVMI). The Mitochondrial intermembrane segment spans residues 625 to 633 (WRRVSGSGT).

It belongs to the mitochondrial Rho GTPase family.

The protein resides in the mitochondrion outer membrane. Mitochondrial GTPase involved in mitochondrial trafficking. Probably involved in control of anterograde transport of mitochondria and their subcellular distribution. The chain is Mitochondrial Rho GTPase 1 (gem1) from Aspergillus oryzae (strain ATCC 42149 / RIB 40) (Yellow koji mold).